A 312-amino-acid chain; its full sequence is Homoserine kinase (312 aa).

ATP is bound at residue P94–A104.

This sequence belongs to the GHMP kinase family. Homoserine kinase subfamily.

The protein resides in the cytoplasm. The enzyme catalyses L-homoserine + ATP = O-phospho-L-homoserine + ADP + H(+). The protein operates within amino-acid biosynthesis; L-threonine biosynthesis; L-threonine from L-aspartate: step 4/5. Its function is as follows. Catalyzes the ATP-dependent phosphorylation of L-homoserine to L-homoserine phosphate. This is Homoserine kinase from Caldanaerobacter subterraneus subsp. tengcongensis (strain DSM 15242 / JCM 11007 / NBRC 100824 / MB4) (Thermoanaerobacter tengcongensis).